Reading from the N-terminus, the 149-residue chain is Transcriptional regulator MraZ (149 aa).

SpoVT-AbrB domains follow at residues R6–D52 and A81–R124.

The protein belongs to the MraZ family. In terms of assembly, forms oligomers.

It localises to the cytoplasm. The protein resides in the nucleoid. The polypeptide is Transcriptional regulator MraZ (Nitratidesulfovibrio vulgaris (strain DSM 19637 / Miyazaki F) (Desulfovibrio vulgaris)).